The primary structure comprises 297 residues: tRNA dimethylallyltransferase (297 aa).

Residue 10–17 (APTGAGKT) participates in ATP binding. Position 12-17 (12-17 (TGAGKT)) interacts with substrate. The interval 34 to 37 (DSRQ) is interaction with substrate tRNA.

The protein belongs to the IPP transferase family. Monomer. Mg(2+) is required as a cofactor.

The enzyme catalyses adenosine(37) in tRNA + dimethylallyl diphosphate = N(6)-dimethylallyladenosine(37) in tRNA + diphosphate. In terms of biological role, catalyzes the transfer of a dimethylallyl group onto the adenine at position 37 in tRNAs that read codons beginning with uridine, leading to the formation of N6-(dimethylallyl)adenosine (i(6)A). This is tRNA dimethylallyltransferase from Leptospira interrogans serogroup Icterohaemorrhagiae serovar Lai (strain 56601).